A 219-amino-acid chain; its full sequence is Probable nicotinate-nucleotide adenylyltransferase (219 aa).

It belongs to the NadD family.

The catalysed reaction is nicotinate beta-D-ribonucleotide + ATP + H(+) = deamido-NAD(+) + diphosphate. It participates in cofactor biosynthesis; NAD(+) biosynthesis; deamido-NAD(+) from nicotinate D-ribonucleotide: step 1/1. Functionally, catalyzes the reversible adenylation of nicotinate mononucleotide (NaMN) to nicotinic acid adenine dinucleotide (NaAD). This is Probable nicotinate-nucleotide adenylyltransferase from Herminiimonas arsenicoxydans.